The primary structure comprises 90 residues: UPF0335 protein RPD_1405 (90 aa).

This sequence belongs to the UPF0335 family.

In Rhodopseudomonas palustris (strain BisB5), this protein is UPF0335 protein RPD_1405.